The following is a 382-amino-acid chain: Dual-specificity RNA methyltransferase RlmN (382 aa).

Catalysis depends on glutamate 96, which acts as the Proton acceptor. The Radical SAM core domain occupies 102-342 (QGGRGTLCVS…VRTTRGEDID (241 aa)). A disulfide bond links cysteine 109 and cysteine 345. Residues cysteine 116, cysteine 120, and cysteine 123 each contribute to the [4Fe-4S] cluster site. S-adenosyl-L-methionine-binding positions include 170 to 171 (GE), serine 202, 224 to 226 (SLH), and asparagine 302. The active-site S-methylcysteine intermediate is cysteine 345.

The protein belongs to the radical SAM superfamily. RlmN family. [4Fe-4S] cluster is required as a cofactor.

It localises to the cytoplasm. The catalysed reaction is adenosine(2503) in 23S rRNA + 2 reduced [2Fe-2S]-[ferredoxin] + 2 S-adenosyl-L-methionine = 2-methyladenosine(2503) in 23S rRNA + 5'-deoxyadenosine + L-methionine + 2 oxidized [2Fe-2S]-[ferredoxin] + S-adenosyl-L-homocysteine. The enzyme catalyses adenosine(37) in tRNA + 2 reduced [2Fe-2S]-[ferredoxin] + 2 S-adenosyl-L-methionine = 2-methyladenosine(37) in tRNA + 5'-deoxyadenosine + L-methionine + 2 oxidized [2Fe-2S]-[ferredoxin] + S-adenosyl-L-homocysteine. Its function is as follows. Specifically methylates position 2 of adenine 2503 in 23S rRNA and position 2 of adenine 37 in tRNAs. m2A2503 modification seems to play a crucial role in the proofreading step occurring at the peptidyl transferase center and thus would serve to optimize ribosomal fidelity. This is Dual-specificity RNA methyltransferase RlmN from Stutzerimonas stutzeri (strain A1501) (Pseudomonas stutzeri).